Here is a 681-residue protein sequence, read N- to C-terminus: uncharacterized protein (681 aa).

In the N-terminal section; belongs to the purine/pyrimidine phosphoribosyltransferase family.

This is an uncharacterized protein from Mycobacterium tuberculosis (strain CDC 1551 / Oshkosh).